Reading from the N-terminus, the 861-residue chain is Protein argonaute-3 (861 aa).

Met1 is modified (N-acetylmethionine). Residues 230–349 enclose the PAZ domain; that stretch reads PVIQFMCEVL…LPLEVCNIVA (120 aa). A Piwi domain is found at 518–820; the sequence is LIIVILPGKT…VAFRARYHLV (303 aa). Residues 530–567 are interaction with guide RNA; it reads YAEVKRVGDTLLGMATQCVQVKNVIKTSPQTLSNLCLK. A divalent metal cation contacts are provided by Asp598, Glu638, and Asp670. The tract at residues 758-806 is interaction with guide RNA; that stretch reads QGTSRPSHYHVLWDDNCFTADELQLLTYQPSAHTYVHCTRSVSIPAPAY. Position 809 (His809) interacts with a divalent metal cation. Residues 824 to 847 are disordered; sequence RDSAEGSHVSGQSNGRDPQALAKA. Ser826 carries the post-translational modification Phosphoserine.

The protein belongs to the argonaute family. Ago subfamily. Interacts with EIF4B, IMP8, PRMT5 and TNRC6B. Interacts with APOBEC3F, APOBEC3G and APOBEC3H. Interacts with EDC4. Post-translationally, ubiquitinated on surface-exposed lysines by a SCF-like E3 ubiquitin-protein ligase complex containing ZSWIM8 during target-directed microRNA degradation (TDMD), a process that mediates degradation of microRNAs (miRNAs). Ubiquitination by the SCF-like E3 ubiquitin-protein ligase complex containing ZSWIM8 leads to its subsequent degradation, thereby exposing miRNAs for degradation. ZSWIM8 recognizes and binds AGO3 when it is engaged with a TDMD target.

The protein localises to the cytoplasm. Its subcellular location is the P-body. The catalysed reaction is Endonucleolytic cleavage to 5'-phosphomonoester.. Its function is as follows. Required for RNA-mediated gene silencing (RNAi). Binds to short RNAs such as microRNAs (miRNAs) and represses the translation of mRNAs which are complementary to them. Proposed to be involved in stabilization of small RNA derivates (siRNA) derived from processed RNA polymerase III-transcribed Alu repeats containing a DR2 retinoic acid response element (RARE) in stem cells and in the subsequent siRNA-dependent degradation of a subset of RNA polymerase II-transcribed coding mRNAs by recruiting a mRNA decapping complex involving EDC4. Possesses RNA slicer activity but only on select RNAs bearing 5'- and 3'-flanking sequences to the region of guide-target complementarity. The protein is Protein argonaute-3 (AGO3) of Bos taurus (Bovine).